The following is a 288-amino-acid chain: Keratin-associated protein 5-4 (288 aa).

9 tandem repeats follow at residues 49–52, 55–58, 61–64, 201–204, 220–223, 239–242, 249–252, 268–271, and 278–281. Positions 49–281 are 9 X 4 AA repeats of C-C-X-P; it reads CCVPICCCKP…CCSQSSCCVP (233 aa).

This sequence belongs to the KRTAP type 5 family. In terms of assembly, interacts with hair keratins. As to expression, restricted to hair root, not detected in any other tissues.

In the hair cortex, hair keratin intermediate filaments are embedded in an interfilamentous matrix, consisting of hair keratin-associated protein (KRTAP), which are essential for the formation of a rigid and resistant hair shaft through their extensive disulfide bond cross-linking with abundant cysteine residues of hair keratins. The matrix proteins include the high-sulfur and high-glycine-tyrosine keratins. In Homo sapiens (Human), this protein is Keratin-associated protein 5-4 (KRTAP5-4).